The primary structure comprises 154 residues: Myoglobin (154 aa).

A Globin domain is found at 2–148; that stretch reads GLSDGEWQLV…FRNDIAAKYK (147 aa). Phosphoserine is present on S4. H65 is a nitrite binding site. An O2-binding site is contributed by H65. T68 carries the post-translational modification Phosphothreonine. Residue H94 coordinates heme b.

This sequence belongs to the globin family. As to quaternary structure, monomeric.

The protein resides in the cytoplasm. Its subcellular location is the sarcoplasm. The catalysed reaction is Fe(III)-heme b-[protein] + nitric oxide + H2O = Fe(II)-heme b-[protein] + nitrite + 2 H(+). The enzyme catalyses H2O2 + AH2 = A + 2 H2O. Functionally, monomeric heme protein which primary function is to store oxygen and facilitate its diffusion within muscle tissues. Reversibly binds oxygen through a pentacoordinated heme iron and enables its timely and efficient release as needed during periods of heightened demand. Depending on the oxidative conditions of tissues and cells, and in addition to its ability to bind oxygen, it also has a nitrite reductase activity whereby it regulates the production of bioactive nitric oxide. Under stress conditions, like hypoxia and anoxia, it also protects cells against reactive oxygen species thanks to its pseudoperoxidase activity. The protein is Myoglobin (MB) of Otolemur crassicaudatus (Brown greater galago).